The primary structure comprises 57 residues: UPF0391 membrane protein HNE_2348 (57 aa).

2 helical membrane-spanning segments follow: residues 4 to 24 (WALT…GGIA) and 27 to 47 (AASI…ITFV).

Belongs to the UPF0391 family.

It localises to the cell membrane. The sequence is that of UPF0391 membrane protein HNE_2348 from Hyphomonas neptunium (strain ATCC 15444).